The sequence spans 286 residues: Pantothenate synthetase (286 aa).

An ATP-binding site is contributed by 30 to 37 (MGFLHEGH). Residue histidine 37 is the Proton donor of the active site. Glutamine 61 contributes to the (R)-pantoate binding site. Position 61 (glutamine 61) interacts with beta-alanine. Residue 147 to 150 (GLKD) coordinates ATP. Glutamine 153 lines the (R)-pantoate pocket. ATP-binding positions include valine 176 and 184-187 (KSSR).

It belongs to the pantothenate synthetase family. In terms of assembly, homodimer.

Its subcellular location is the cytoplasm. It carries out the reaction (R)-pantoate + beta-alanine + ATP = (R)-pantothenate + AMP + diphosphate + H(+). The protein operates within cofactor biosynthesis; (R)-pantothenate biosynthesis; (R)-pantothenate from (R)-pantoate and beta-alanine: step 1/1. Functionally, catalyzes the condensation of pantoate with beta-alanine in an ATP-dependent reaction via a pantoyl-adenylate intermediate. This is Pantothenate synthetase from Bacillus velezensis (strain DSM 23117 / BGSC 10A6 / LMG 26770 / FZB42) (Bacillus amyloliquefaciens subsp. plantarum).